A 393-amino-acid polypeptide reads, in one-letter code: RNA polymerase II holoenzyme cyclin-like subunit (393 aa).

The region spanning 51–146 (ICKRLNLRQR…LLEEMEFDMV (96 aa)) is the Cyclin N-terminal domain.

This sequence belongs to the cyclin family. Cyclin C subfamily. As to quaternary structure, component of the SRB8-11 complex, a regulatory module of the Mediator complex.

The protein localises to the nucleus. Functionally, component of the SRB8-11 complex. The SRB8-11 complex is a regulatory module of the Mediator complex which is itself involved in regulation of basal and activated RNA polymerase II-dependent transcription. The SRB8-11 complex may be involved in the transcriptional repression of a subset of genes regulated by Mediator. It may inhibit the association of the Mediator complex with RNA polymerase II to form the holoenzyme complex. The SRB8-11 complex phosphorylates the C-terminal domain (CTD) of the largest subunit of RNA polymerase II. The sequence is that of RNA polymerase II holoenzyme cyclin-like subunit (SSN8) from Mycosarcoma maydis (Corn smut fungus).